The sequence spans 146 residues: Large-conductance mechanosensitive channel (146 aa).

Helical transmembrane passes span Ala12–Phe32 and Gly83–Ile103.

The protein belongs to the MscL family. Homopentamer.

It localises to the cell inner membrane. Channel that opens in response to stretch forces in the membrane lipid bilayer. May participate in the regulation of osmotic pressure changes within the cell. The polypeptide is Large-conductance mechanosensitive channel (Phocaeicola vulgatus (strain ATCC 8482 / DSM 1447 / JCM 5826 / CCUG 4940 / NBRC 14291 / NCTC 11154) (Bacteroides vulgatus)).